Consider the following 29-residue polypeptide: Cyclotide cter-L (29 aa).

Positions 1-29 form a cross-link, cyclopeptide (His-Asp); sequence HEPCGESCVFIPCITTVVGCSCKNKVCYD. Cystine bridges form between Cys4/Cys20, Cys8/Cys22, and Cys13/Cys27.

Contains 3 disulfide bonds. Post-translationally, this is a cyclic peptide.

Functionally, probably participates in a plant defense mechanism. This Clitoria ternatea (Butterfly pea) protein is Cyclotide cter-L.